We begin with the raw amino-acid sequence, 539 residues long: uncharacterized protein (539 aa).

2 ABC transporter domains span residues 8 to 265 (VRIT…SRAL) and 307 to 537 (IELD…IGDM). 339 to 346 (GDNGSGKS) contacts ATP.

This sequence belongs to the ABC transporter superfamily.

The protein resides in the mitochondrion. This is an uncharacterized protein from Saccharomyces cerevisiae (strain ATCC 204508 / S288c) (Baker's yeast).